The following is a 298-amino-acid chain: Glycine--tRNA ligase alpha subunit (298 aa).

This sequence belongs to the class-II aminoacyl-tRNA synthetase family. Tetramer of two alpha and two beta subunits.

The protein localises to the cytoplasm. It catalyses the reaction tRNA(Gly) + glycine + ATP = glycyl-tRNA(Gly) + AMP + diphosphate. This Helicobacter pylori (strain J99 / ATCC 700824) (Campylobacter pylori J99) protein is Glycine--tRNA ligase alpha subunit (glyQ).